The sequence spans 475 residues: 3-isopropylmalate dehydratase large subunit (475 aa).

[4Fe-4S] cluster is bound by residues C349, C409, and C412.

It belongs to the aconitase/IPM isomerase family. LeuC type 1 subfamily. Heterodimer of LeuC and LeuD. [4Fe-4S] cluster is required as a cofactor.

The enzyme catalyses (2R,3S)-3-isopropylmalate = (2S)-2-isopropylmalate. Its pathway is amino-acid biosynthesis; L-leucine biosynthesis; L-leucine from 3-methyl-2-oxobutanoate: step 2/4. Functionally, catalyzes the isomerization between 2-isopropylmalate and 3-isopropylmalate, via the formation of 2-isopropylmaleate. The polypeptide is 3-isopropylmalate dehydratase large subunit (Cereibacter sphaeroides (strain ATCC 17029 / ATH 2.4.9) (Rhodobacter sphaeroides)).